Reading from the N-terminus, the 107-residue chain is Large ribosomal subunit protein P1 (107 aa).

A disordered region spans residues 67-107; it reads GAAPAAAAPAAGGAPAAGAAPKKEEKKEPSEEEDMGFSLFD. Residues 69-86 show a composition bias toward low complexity; the sequence is APAAAAPAAGGAPAAGAA.

Belongs to the eukaryotic ribosomal protein P1/P2 family. P1 and P2 exist as dimers at the large ribosomal subunit.

Functionally, plays an important role in the elongation step of protein synthesis. This chain is Large ribosomal subunit protein P1, found in Chlamydomonas reinhardtii (Chlamydomonas smithii).